The following is a 205-amino-acid chain: Adenylyl-sulfate kinase (205 aa).

31–38 is an ATP binding site; sequence GLSGAGKS. The active-site Phosphoserine intermediate is Ser105.

The protein belongs to the APS kinase family.

The enzyme catalyses adenosine 5'-phosphosulfate + ATP = 3'-phosphoadenylyl sulfate + ADP + H(+). The protein operates within sulfur metabolism; hydrogen sulfide biosynthesis; sulfite from sulfate: step 2/3. In terms of biological role, catalyzes the synthesis of activated sulfate. This is Adenylyl-sulfate kinase from Shewanella sp. (strain ANA-3).